A 112-amino-acid chain; its full sequence is Cytochrome c6 (112 aa).

An N-terminal signal peptide occupies residues 1-25 (MKTLLTILALTLVTLTTWLSTPAFA). Positions 39, 42, 43, and 83 each coordinate heme c.

The protein belongs to the cytochrome c family. PetJ subfamily. As to quaternary structure, monomer. Post-translationally, binds 1 heme c group covalently per subunit.

The protein localises to the cellular thylakoid lumen. Functions as an electron carrier between membrane-bound cytochrome b6-f and photosystem I in oxygenic photosynthesis. This is Cytochrome c6 from Synechococcus sp. (strain ATCC 27167 / PCC 6312).